The sequence spans 206 residues: dITP/XTP pyrophosphatase (206 aa).

Residue 7 to 12 coordinates substrate; sequence SRNPKK. D72 acts as the Proton acceptor in catalysis. Residue D72 participates in Mg(2+) binding. Residues S73, 155 to 158, K178, and 183 to 184 each bind substrate; these read FGYD and HR.

It belongs to the HAM1 NTPase family. In terms of assembly, homodimer. The cofactor is Mg(2+).

It catalyses the reaction XTP + H2O = XMP + diphosphate + H(+). The enzyme catalyses dITP + H2O = dIMP + diphosphate + H(+). It carries out the reaction ITP + H2O = IMP + diphosphate + H(+). Pyrophosphatase that catalyzes the hydrolysis of nucleoside triphosphates to their monophosphate derivatives, with a high preference for the non-canonical purine nucleotides XTP (xanthosine triphosphate), dITP (deoxyinosine triphosphate) and ITP. Seems to function as a house-cleaning enzyme that removes non-canonical purine nucleotides from the nucleotide pool, thus preventing their incorporation into DNA/RNA and avoiding chromosomal lesions. In Mycobacteroides abscessus (strain ATCC 19977 / DSM 44196 / CCUG 20993 / CIP 104536 / JCM 13569 / NCTC 13031 / TMC 1543 / L948) (Mycobacterium abscessus), this protein is dITP/XTP pyrophosphatase.